The following is a 380-amino-acid chain: Chorismate synthase (380 aa).

Positions 40 and 46 each coordinate NADP(+). FMN-binding positions include 128–130 (RSS), 247–248 (QA), glycine 292, 307–311 (KPIPT), and arginine 333.

The protein belongs to the chorismate synthase family. In terms of assembly, homotetramer. Requires FMNH2 as cofactor.

The catalysed reaction is 5-O-(1-carboxyvinyl)-3-phosphoshikimate = chorismate + phosphate. Its pathway is metabolic intermediate biosynthesis; chorismate biosynthesis; chorismate from D-erythrose 4-phosphate and phosphoenolpyruvate: step 7/7. In terms of biological role, catalyzes the anti-1,4-elimination of the C-3 phosphate and the C-6 proR hydrogen from 5-enolpyruvylshikimate-3-phosphate (EPSP) to yield chorismate, which is the branch point compound that serves as the starting substrate for the three terminal pathways of aromatic amino acid biosynthesis. This reaction introduces a second double bond into the aromatic ring system. This is Chorismate synthase from Alkaliphilus metalliredigens (strain QYMF).